We begin with the raw amino-acid sequence, 411 residues long: Tetra-peptide repeat homeobox protein 1 (411 aa).

Positions 3-24 (SLREQQLQVWFKNRRAKLARER) form a DNA-binding region, homeobox. Disordered stretches follow at residues 20–63 (LARE…SGIL), 88–246 (IPAA…ISGP), 286–340 (PILS…SPDA), and 363–411 (LEGS…LLDL). Low complexity predominate over residues 27–55 (QQQPQRVPGQRGRGARAAPLVPAASASAP). Composition is skewed to pro residues over residues 95–139 (GPGP…PGPI) and 149–246 (FRGP…ISGP). Positions 295 to 307 (SPGSLPGLAPILG) are enriched in low complexity. Pro residues predominate over residues 319–335 (APIPGPGSLPAPAPLWP). Polar residues-rich tracts occupy residues 366–376 (SSVSTMTSQYQ) and 388–402 (GSQPQEEGGSVNENH).

It belongs to the paired homeobox family.

The protein localises to the nucleus. Functionally, transcription factor expressed after fertilization required for zygotic genome activation (ZGA), a critical event in early embryonic development during which the developmental control passes from maternally provided mRNAs to the expression of the zygotic genome after fertilization. Binds and activates expression of key ZGA marker genes, such as NANOGNB, ZSCAN4, DUXB, KLF5 and DPPA3. Binds to regulatory DNA sequences containing a 5'-TAATCC-3' sequence motif. This is Tetra-peptide repeat homeobox protein 1 from Homo sapiens (Human).